The following is a 391-amino-acid chain: Elongation factor Tu (391 aa).

Residues 10–201 (KPHVNIGTIG…AVDAYIPTPE (192 aa)) enclose the tr-type G domain. Residues 19–26 (GHVDHGKT) form a G1 region. 19-26 (GHVDHGKT) contributes to the GTP binding site. Threonine 26 lines the Mg(2+) pocket. The G2 stretch occupies residues 55–59 (GITIS). Residues 76-79 (DCPG) form a G3 region. GTP is bound by residues 76–80 (DCPGH) and 131–134 (NKVD). The segment at 131 to 134 (NKVD) is G4. Positions 169–171 (SAL) are G5.

It belongs to the TRAFAC class translation factor GTPase superfamily. Classic translation factor GTPase family. EF-Tu/EF-1A subfamily. Monomer.

Its subcellular location is the cytoplasm. It catalyses the reaction GTP + H2O = GDP + phosphate + H(+). Its function is as follows. GTP hydrolase that promotes the GTP-dependent binding of aminoacyl-tRNA to the A-site of ribosomes during protein biosynthesis. The protein is Elongation factor Tu of Rhizobium meliloti (strain 1021) (Ensifer meliloti).